Consider the following 287-residue polypeptide: Glucose uptake protein GlcU (287 aa).

The next 8 membrane-spanning stretches (helical) occupy residues 4-26, 38-60, 110-132, 153-175, 180-197, 210-227, 232-254, and 261-283; these read LLALLPALFWGSIVLFNVKLGGG, ALIVSIVIYFFVQPVLSLRIFIV, WSTPIAITLGVLALIFIIVGIIL, ILILLVSTLGYLVYVVVARLFNV, ALLPQAIGMVVGGLVLTY, ILPGLIWAGGNMFLFISQ, VATSFSLSQMGIVISTLGGIFIL, and RQLIAIAIGIILIIAAAVFLGIA.

It belongs to the GRP transporter (TC 2.A.7.5) family.

It is found in the cell membrane. Its function is as follows. Involved in the uptake of glucose. This Bacillus subtilis (strain 168) protein is Glucose uptake protein GlcU (glcU).